Reading from the N-terminus, the 124-residue chain is Large ribosomal subunit protein uL22 (124 aa).

The protein belongs to the universal ribosomal protein uL22 family. In terms of assembly, part of the 50S ribosomal subunit.

Its function is as follows. This protein binds specifically to 23S rRNA; its binding is stimulated by other ribosomal proteins, e.g. L4, L17, and L20. It is important during the early stages of 50S assembly. It makes multiple contacts with different domains of the 23S rRNA in the assembled 50S subunit and ribosome. In terms of biological role, the globular domain of the protein is located near the polypeptide exit tunnel on the outside of the subunit, while an extended beta-hairpin is found that lines the wall of the exit tunnel in the center of the 70S ribosome. The polypeptide is Large ribosomal subunit protein uL22 (Treponema pallidum (strain Nichols)).